A 310-amino-acid polypeptide reads, in one-letter code: Proline iminopeptidase (310 aa).

Residues 33–290 enclose the AB hydrolase-1 domain; sequence PVIFLHGGPG…RVVQAGHCAF (258 aa). The active-site Nucleophile is the S107. D260 is a catalytic residue. H287 (proton donor) is an active-site residue.

This sequence belongs to the peptidase S33 family.

Its subcellular location is the cytoplasm. It carries out the reaction Release of N-terminal proline from a peptide.. Functionally, hydrolyzes peptides having the structure Pro-Y-Z to yield free proline. Also hydrolyzes the dipeptide Pro-Gly. This Neisseria gonorrhoeae protein is Proline iminopeptidase (pip).